The following is a 289-amino-acid chain: Protoheme IX farnesyltransferase 2 (289 aa).

9 consecutive transmembrane segments (helical) span residues 1–21 (MIKPGIIMGNLISVTGGFLLA), 28–48 (LTLMLMTILGLSLVVASGCGL), 76–96 (YSVLVFSLALGLIGFGLLAIF), 100–120 (IALLFAVIGYLVYVGIYSLYM), 125–145 (VYGTLIGSFSGAVPPVVGYCA), 155–175 (VILLLMFSLWQMPHSYAIAIF), 199–219 (LHIVLYIAVFSLVSALLPLAG), 221–241 (TGIAFMAVTCATSLWWLGMAL), and 260–280 (CSIVTITALSIAMAMDFQLVV).

It belongs to the UbiA prenyltransferase family. Protoheme IX farnesyltransferase subfamily.

The protein localises to the cell inner membrane. The catalysed reaction is heme b + (2E,6E)-farnesyl diphosphate + H2O = Fe(II)-heme o + diphosphate. It participates in porphyrin-containing compound metabolism; heme O biosynthesis; heme O from protoheme: step 1/1. Its function is as follows. Converts heme B (protoheme IX) to heme O by substitution of the vinyl group on carbon 2 of heme B porphyrin ring with a hydroxyethyl farnesyl side group. This Shewanella woodyi (strain ATCC 51908 / MS32) protein is Protoheme IX farnesyltransferase 2.